A 149-amino-acid polypeptide reads, in one-letter code: Nucleoside diphosphate kinase (149 aa).

The ATP site is built by Lys-9, Phe-57, Arg-85, Thr-91, Arg-102, and Asn-112. His-115 serves as the catalytic Pros-phosphohistidine intermediate.

This sequence belongs to the NDK family. As to quaternary structure, homotetramer. Mg(2+) is required as a cofactor.

It localises to the cytoplasm. The catalysed reaction is a 2'-deoxyribonucleoside 5'-diphosphate + ATP = a 2'-deoxyribonucleoside 5'-triphosphate + ADP. It catalyses the reaction a ribonucleoside 5'-diphosphate + ATP = a ribonucleoside 5'-triphosphate + ADP. Major role in the synthesis of nucleoside triphosphates other than ATP. The ATP gamma phosphate is transferred to the NDP beta phosphate via a ping-pong mechanism, using a phosphorylated active-site intermediate. In Herpetosiphon aurantiacus (strain ATCC 23779 / DSM 785 / 114-95), this protein is Nucleoside diphosphate kinase.